Here is a 465-residue protein sequence, read N- to C-terminus: GTPase Der (465 aa).

EngA-type G domains follow at residues 3 to 166 and 184 to 358; these read FLVA…LNEY and IHFS…ACAN. Residues 9 to 16, 56 to 60, 118 to 121, 190 to 197, 237 to 241, and 302 to 305 each bind GTP; these read GRANVGKS, DTGGI, NKVD, GRPNVGKS, DTAGV, and NKWD. Positions 359 to 443 constitute a KH-like domain; sequence KKITTADATR…PIVFEFKQSE (85 aa). A disordered region spans residues 446 to 465; sequence FADRKNKRSKDEGSKSKKVK.

The protein belongs to the TRAFAC class TrmE-Era-EngA-EngB-Septin-like GTPase superfamily. EngA (Der) GTPase family. Associates with the 50S ribosomal subunit.

Its function is as follows. GTPase that plays an essential role in the late steps of ribosome biogenesis. The chain is GTPase Der from Francisella tularensis subsp. tularensis (strain WY96-3418).